We begin with the raw amino-acid sequence, 310 residues long: Carbamate kinase 1 (310 aa).

Belongs to the carbamate kinase family.

The protein resides in the cytoplasm. The enzyme catalyses hydrogencarbonate + NH4(+) + ATP = carbamoyl phosphate + ADP + H2O + H(+). The protein operates within metabolic intermediate metabolism; carbamoyl phosphate degradation; CO(2) and NH(3) from carbamoyl phosphate: step 1/1. This chain is Carbamate kinase 1 (arcC1), found in Staphylococcus aureus (strain bovine RF122 / ET3-1).